Consider the following 458-residue polypeptide: UDP-N-acetylglucosamine 1-carboxyvinyltransferase (458 aa).

34–35 (KN) is a phosphoenolpyruvate binding site. A UDP-N-acetyl-alpha-D-glucosamine-binding site is contributed by R104. Catalysis depends on C128, which acts as the Proton donor. C128 bears the 2-(S-cysteinyl)pyruvic acid O-phosphothioketal mark. Residues D320 and V342 each contribute to the UDP-N-acetyl-alpha-D-glucosamine site.

The protein belongs to the EPSP synthase family. MurA subfamily.

The protein resides in the cytoplasm. The enzyme catalyses phosphoenolpyruvate + UDP-N-acetyl-alpha-D-glucosamine = UDP-N-acetyl-3-O-(1-carboxyvinyl)-alpha-D-glucosamine + phosphate. It participates in cell wall biogenesis; peptidoglycan biosynthesis. Its function is as follows. Cell wall formation. Adds enolpyruvyl to UDP-N-acetylglucosamine. This Prochlorococcus marinus (strain NATL1A) protein is UDP-N-acetylglucosamine 1-carboxyvinyltransferase.